Reading from the N-terminus, the 188-residue chain is Elongation factor P (188 aa).

The protein belongs to the elongation factor P family.

The protein resides in the cytoplasm. Its pathway is protein biosynthesis; polypeptide chain elongation. Its function is as follows. Involved in peptide bond synthesis. Stimulates efficient translation and peptide-bond synthesis on native or reconstituted 70S ribosomes in vitro. Probably functions indirectly by altering the affinity of the ribosome for aminoacyl-tRNA, thus increasing their reactivity as acceptors for peptidyl transferase. This is Elongation factor P from Rickettsia bellii (strain OSU 85-389).